Consider the following 404-residue polypeptide: O-methyltransferase GME11366 (404 aa).

S-adenosyl-L-methionine contacts are provided by residues 237–238 (GG), aspartate 262, arginine 301, and arginine 302. Histidine 305 (proton acceptor) is an active-site residue.

This sequence belongs to the class I-like SAM-binding methyltransferase superfamily. Cation-independent O-methyltransferase family.

It functions in the pathway secondary metabolite biosynthesis. O-methyltransferase; part of the gene cluster that mediates the biosynthesis of dibenzodioxocinones such as pestalotiollide B, a novel class of inhibitors against cholesterol ester transfer protein (CEPT). The biosynthesis initiates from condensation of acetate and malonate units catalyzed by the non-reducing PKS pks8/GME11356. Pks8/GME11356 lacks a thioesterase (TE) domain, which is important to the cyclizing of the third ring of atrochrysone carboxylic acid, and the esterase GME11355 might play the role of TE and catalyzes the cyclization reaction of the C ring. The lactamase-like protein GME11357 (or other beta-lactamases in Pestalotiopsis microspora) probably hydrolyzes the thioester bond between the ACP of pks8/GME11356 and the intermediate to release atrochrysone carboxylic acid, which is spontaneously dehydrates to form endocrocin anthrone. Endocrocin anthrone is further converted to emodin via the endocrocin intermediate. Emodin is then oxidized by several enzymes such as the Baeyer-Villiger oxidase GME11358, the oxidoreductase GME11367, the short chain dehydrogenase/reductase GME11373, as well as by other oxidoreductases from the cluster, to modify the A and C rings and open the B ring, and finally yield monodictyphenone. The prenyltransferase GME11375 may catalyze the addition reaction between the C5 side chains and the carbon bone of dibenzodioxocinones. The remaining biochemical reactions to the final product dibenzodioxocinones should be methylation catalyzed by methyltransferase GME11366 and reduction and lactonization reaction catalyzed by a series of oxidordeuctases. The chain is O-methyltransferase GME11366 from Pestalotiopsis microspora.